The chain runs to 630 residues: tRNA uridine 5-carboxymethylaminomethyl modification enzyme MnmG (630 aa).

Gly13–Gly18 is an FAD binding site. Residue Gly273–Phe287 participates in NAD(+) binding.

Belongs to the MnmG family. In terms of assembly, homodimer. Heterotetramer of two MnmE and two MnmG subunits. FAD serves as cofactor.

Its subcellular location is the cytoplasm. NAD-binding protein involved in the addition of a carboxymethylaminomethyl (cmnm) group at the wobble position (U34) of certain tRNAs, forming tRNA-cmnm(5)s(2)U34. The protein is tRNA uridine 5-carboxymethylaminomethyl modification enzyme MnmG of Saccharophagus degradans (strain 2-40 / ATCC 43961 / DSM 17024).